The sequence spans 306 residues: Putative transcriptional regulator (306 aa).

Positions Met-1–Thr-61 constitute an HTH lysR-type domain. The H-T-H motif DNA-binding region spans Phe-21–Ser-40.

Belongs to the LysR transcriptional regulatory family.

May have a role in the regulation of oprD expression. This Pseudomonas aeruginosa (strain ATCC 15692 / DSM 22644 / CIP 104116 / JCM 14847 / LMG 12228 / 1C / PRS 101 / PAO1) protein is Putative transcriptional regulator.